We begin with the raw amino-acid sequence, 308 residues long: MAKHQSVLLHESIKGLAIKADGIYFDGTFGRGGHSREILNHLSDKGRLFAIDKDLDAVQYAKDYFGLDKRFQIFHGSFAQIKEFASQAGVIGAVDGILLDLGVSSPQLDNPERGFSFMLQGPLDMRMDLTQSINAANFVNEAEVNELAHVFRAYGEERFAGRIAKAIVDARKLKPITTTLELAEIVKEANPKWEKHKHPATRVFQAIRIHVNQELTDLSNCLEQCLDVLGPGGRLAVISFHSLEDRIVKQFMRDKEQGNRPPVEVPIKYEELKTNFKKVGKAVKPQSSEIKENVRSRSAVLRIGEKLA.

S-adenosyl-L-methionine contacts are provided by residues glycine 32 to histidine 34, aspartate 52, phenylalanine 78, aspartate 100, and glutamine 107.

It belongs to the methyltransferase superfamily. RsmH family.

It localises to the cytoplasm. It catalyses the reaction cytidine(1402) in 16S rRNA + S-adenosyl-L-methionine = N(4)-methylcytidine(1402) in 16S rRNA + S-adenosyl-L-homocysteine + H(+). Its function is as follows. Specifically methylates the N4 position of cytidine in position 1402 (C1402) of 16S rRNA. The protein is Ribosomal RNA small subunit methyltransferase H of Legionella pneumophila (strain Paris).